The following is a 167-amino-acid chain: Ubiquitin-fold modifier-conjugating enzyme 1 (167 aa).

Cys-116 functions as the Glycyl thioester intermediate in the catalytic mechanism. Lys-122 is covalently cross-linked (Glycyl lysine isopeptide (Lys-Gly) (interchain with G-Cter in UFM1)).

This sequence belongs to the ubiquitin-conjugating enzyme family. UFC1 subfamily. In terms of assembly, interacts with UBA5 (via C-terminus). Interacts with UFL1. Interacts with UFM1. Interacts with KIRREL3. Post-translationally, ufmylated at Lys-122. Deufmylated by UFSP1.

Functionally, E2-like enzyme which specifically catalyzes the second step in ufmylation. Accepts the ubiquitin-like modifier UFM1 from the E1 enzyme UBA5 and forms an intermediate with UFM1 via a thioester linkage. Ufmylation is involved in various processes, such as ribosome recycling, response to DNA damage, interferon response or reticulophagy (also called ER-phagy). This is Ubiquitin-fold modifier-conjugating enzyme 1 from Rattus norvegicus (Rat).